The chain runs to 182 residues: NADH-quinone oxidoreductase subunit I (182 aa).

4Fe-4S ferredoxin-type domains follow at residues 52 to 82 and 92 to 121; these read LTRD…LQKA and DFFR…LTPD. C62, C65, C68, C72, C101, C104, C107, and C111 together coordinate [4Fe-4S] cluster.

It belongs to the complex I 23 kDa subunit family. In terms of assembly, NDH-1 is composed of 13 different subunits. Subunits NuoA, H, J, K, L, M, N constitute the membrane sector of the complex. It depends on [4Fe-4S] cluster as a cofactor.

The protein localises to the cell inner membrane. It carries out the reaction a quinone + NADH + 5 H(+)(in) = a quinol + NAD(+) + 4 H(+)(out). Functionally, NDH-1 shuttles electrons from NADH, via FMN and iron-sulfur (Fe-S) centers, to quinones in the respiratory chain. The immediate electron acceptor for the enzyme in this species is believed to be ubiquinone. Couples the redox reaction to proton translocation (for every two electrons transferred, four hydrogen ions are translocated across the cytoplasmic membrane), and thus conserves the redox energy in a proton gradient. This Pseudomonas savastanoi pv. phaseolicola (strain 1448A / Race 6) (Pseudomonas syringae pv. phaseolicola (strain 1448A / Race 6)) protein is NADH-quinone oxidoreductase subunit I.